The primary structure comprises 173 residues: MGTPCHYALFDLQPSFRLDLDKLATRYRELAREVHPDRFADASEREQRIALEKSAALNDAYQTLRSAPRRARYLLAISGHEVPQEVTVHDPDFLLQQMQWREELEELQDEADLDGVGVFKKRLKFAQDTLNEDFAACWDAPGERDKAERLMRRMQFLDKLAQEVRQLEERLDD.

Positions 5–77 (CHYALFDLQP…PRRARYLLAI (73 aa)) constitute a J domain.

It belongs to the HscB family. In terms of assembly, interacts with HscA and stimulates its ATPase activity.

Functionally, co-chaperone involved in the maturation of iron-sulfur cluster-containing proteins. Seems to help targeting proteins to be folded toward HscA. The chain is Co-chaperone protein HscB homolog from Pseudomonas putida (strain GB-1).